The following is a 164-amino-acid chain: Putative 4-hydroxy-4-methyl-2-oxoglutarate aldolase (164 aa).

Residues 75–78 (GDML) and arginine 97 contribute to the substrate site. Residue aspartate 98 participates in a divalent metal cation binding.

It belongs to the class II aldolase/RraA-like family. In terms of assembly, homotrimer. The cofactor is a divalent metal cation.

The catalysed reaction is 4-hydroxy-4-methyl-2-oxoglutarate = 2 pyruvate. It catalyses the reaction oxaloacetate + H(+) = pyruvate + CO2. Functionally, catalyzes the aldol cleavage of 4-hydroxy-4-methyl-2-oxoglutarate (HMG) into 2 molecules of pyruvate. Also contains a secondary oxaloacetate (OAA) decarboxylase activity due to the common pyruvate enolate transition state formed following C-C bond cleavage in the retro-aldol and decarboxylation reactions. In Hahella chejuensis (strain KCTC 2396), this protein is Putative 4-hydroxy-4-methyl-2-oxoglutarate aldolase.